Consider the following 472-residue polypeptide: UDP-N-acetylmuramoyl-L-alanyl-D-glutamate--2,6-diaminopimelate ligase (472 aa).

Serine 21 serves as a coordination point for UDP-N-acetyl-alpha-D-muramoyl-L-alanyl-D-glutamate. 99–105 (GTNGKTS) contributes to the ATP binding site. UDP-N-acetyl-alpha-D-muramoyl-L-alanyl-D-glutamate-binding positions include 143–144 (TT), serine 170, glutamine 176, and arginine 178. The residue at position 210 (lysine 210) is an N6-carboxylysine. Meso-2,6-diaminopimelate-binding positions include arginine 367, 391–394 (DNPR), glycine 440, and glutamate 444. The Meso-diaminopimelate recognition motif motif lies at 391 to 394 (DNPR).

This sequence belongs to the MurCDEF family. MurE subfamily. The cofactor is Mg(2+). Carboxylation is probably crucial for Mg(2+) binding and, consequently, for the gamma-phosphate positioning of ATP.

It is found in the cytoplasm. It carries out the reaction UDP-N-acetyl-alpha-D-muramoyl-L-alanyl-D-glutamate + meso-2,6-diaminopimelate + ATP = UDP-N-acetyl-alpha-D-muramoyl-L-alanyl-gamma-D-glutamyl-meso-2,6-diaminopimelate + ADP + phosphate + H(+). Its pathway is cell wall biogenesis; peptidoglycan biosynthesis. Catalyzes the addition of meso-diaminopimelic acid to the nucleotide precursor UDP-N-acetylmuramoyl-L-alanyl-D-glutamate (UMAG) in the biosynthesis of bacterial cell-wall peptidoglycan. This chain is UDP-N-acetylmuramoyl-L-alanyl-D-glutamate--2,6-diaminopimelate ligase, found in Anaplasma marginale (strain St. Maries).